A 151-amino-acid polypeptide reads, in one-letter code: Small ribosomal subunit protein uS19 (151 aa).

Residues 1 to 23 (MVVNKQGSVKSIKRKARKSRKVT) are disordered. Positions 11–23 (SIKRKARKSRKVT) are enriched in basic residues.

The protein belongs to the universal ribosomal protein uS19 family.

Protein S19 forms a complex with S13 that binds strongly to the 16S ribosomal RNA. The chain is Small ribosomal subunit protein uS19 (rps19) from Thermoplasma volcanium (strain ATCC 51530 / DSM 4299 / JCM 9571 / NBRC 15438 / GSS1).